Here is a 394-residue protein sequence, read N- to C-terminus: Na(+)/H(+) antiporter NhaA (394 aa).

11 helical membrane-spanning segments follow: residues 14–34 (AGGI…NSVF), 59–79 (LLMW…GMEV), 95–115 (IFPA…YWFI), 125–145 (GWAI…ALLS), 155–175 (FLLA…ALFF), 177–197 (NELS…LITM), 204–224 (GIIH…KSGV), 258–278 (WCAF…SLAG), 292–312 (ITLG…YLAV), 328–348 (VFAI…IAGL), and 362–382 (LSRL…YILL).

This sequence belongs to the NhaA Na(+)/H(+) (TC 2.A.33) antiporter family.

Its subcellular location is the cell inner membrane. It carries out the reaction Na(+)(in) + 2 H(+)(out) = Na(+)(out) + 2 H(+)(in). Functionally, na(+)/H(+) antiporter that extrudes sodium in exchange for external protons. This Haemophilus ducreyi (strain 35000HP / ATCC 700724) protein is Na(+)/H(+) antiporter NhaA.